The following is a 248-amino-acid chain: Homeobox protein Hox-A4 (248 aa).

A disordered region spans residues 23-107; the sequence is YQQSGYIPNP…PDGGAGANAS (85 aa). Over residues 35–51 the composition is skewed to basic and acidic residues; sequence YYERPKDTGFPHHDEPS. The Antp-type hexapeptide signature appears at 128 to 133; it reads VYPWMK. The segment at residues 149–208 is a DNA-binding region (homeobox); sequence PKRSRTAYTRQQALELEKEFHFNRYLTRRRRVEIAHTMCLSERQVKIWFQNRRMKWKKEH. A disordered region spans residues 207 to 248; it reads EHKLPNTKIRSSSSASSSASGAQQQQIKTGQQLVPTPCTAGL. A compositionally biased stretch (low complexity) spans 217–238; that stretch reads SSSSASSSASGAQQQQIKTGQQ.

This sequence belongs to the Antp homeobox family. Deformed subfamily.

It is found in the nucleus. Functionally, sequence-specific transcription factor which is part of a developmental regulatory system that provides cells with specific positional identities on the anterior-posterior axis. The protein is Homeobox protein Hox-A4 (hoxa4) of Morone saxatilis (Striped bass).